A 258-amino-acid chain; its full sequence is Small ribosomal subunit protein mS40 (258 aa).

Residues 1–35 (MAASVLNVLLRRLPYFSPFRGAYGVQVPLQTLCTK) constitute a mitochondrion transit peptide. A Phosphoserine modification is found at serine 49. Residues 221–258 (QGHLREESGPPPESMPKVPLTAPNEATSTEQAGPQSAL) form a disordered region. A compositionally biased stretch (polar residues) spans 244–258 (NEATSTEQAGPQSAL).

Belongs to the bacterial ribosomal protein bS18 family. Mitochondrion-specific ribosomal protein mS40 subfamily. In terms of assembly, component of the mitochondrial ribosome small subunit (28S) which comprises a 12S rRNA and about 30 distinct proteins.

The protein localises to the mitochondrion. This is Small ribosomal subunit protein mS40 from Bos taurus (Bovine).